A 91-amino-acid chain; its full sequence is Long neurotoxin OH-57 (91 aa).

The first 21 residues, 1-21 (MKTLLLTLVVVTIVCLDLGYT), serve as a signal peptide directing secretion. Intrachain disulfides connect cysteine 24-cysteine 41, cysteine 34-cysteine 62, cysteine 47-cysteine 51, cysteine 66-cysteine 77, and cysteine 78-cysteine 83.

This sequence belongs to the three-finger toxin family. Long-chain subfamily. Type II alpha-neurotoxin sub-subfamily. As to expression, expressed by the venom gland.

Its subcellular location is the secreted. In terms of biological role, binds with high affinity to muscular (alpha-1/CHRNA1) and neuronal (alpha-7/CHRNA7) nicotinic acetylcholine receptor (nAChR) and inhibits acetylcholine from binding to the receptor, thereby impairing neuromuscular and neuronal transmission. The sequence is that of Long neurotoxin OH-57 from Ophiophagus hannah (King cobra).